The chain runs to 125 residues: Small ribosomal subunit protein uS12m (125 aa).

Disordered stretches follow at residues 1–50 (MPTL…SAPR) and 106–125 (GIPN…PKSI). The span at 10–23 (HGREEKRRTDRTRA) shows a compositional bias: basic and acidic residues.

It belongs to the universal ribosomal protein uS12 family.

The protein resides in the mitochondrion. Its function is as follows. Protein S12 is involved in the translation initiation step. The sequence is that of Small ribosomal subunit protein uS12m (RPS12) from Magnolia soulangeana (Saucer magnolia).